The primary structure comprises 440 residues: Thymidine phosphorylase (440 aa).

The protein belongs to the thymidine/pyrimidine-nucleoside phosphorylase family. In terms of assembly, homodimer.

It catalyses the reaction thymidine + phosphate = 2-deoxy-alpha-D-ribose 1-phosphate + thymine. It participates in pyrimidine metabolism; dTMP biosynthesis via salvage pathway; dTMP from thymine: step 1/2. In terms of biological role, the enzymes which catalyze the reversible phosphorolysis of pyrimidine nucleosides are involved in the degradation of these compounds and in their utilization as carbon and energy sources, or in the rescue of pyrimidine bases for nucleotide synthesis. The protein is Thymidine phosphorylase of Escherichia coli O139:H28 (strain E24377A / ETEC).